Consider the following 295-residue polypeptide: Phosphatidylserine decarboxylase proenzyme (295 aa).

Catalysis depends on charge relay system; for autoendoproteolytic cleavage activity residues Asp-113, His-169, and Ser-256. Ser-256 (schiff-base intermediate with substrate; via pyruvic acid; for decarboxylase activity) is an active-site residue. Residue Ser-256 is modified to Pyruvic acid (Ser); by autocatalysis.

It belongs to the phosphatidylserine decarboxylase family. PSD-B subfamily. Prokaryotic type II sub-subfamily. Heterodimer of a large membrane-associated beta subunit and a small pyruvoyl-containing alpha subunit. Requires pyruvate as cofactor. Is synthesized initially as an inactive proenzyme. Formation of the active enzyme involves a self-maturation process in which the active site pyruvoyl group is generated from an internal serine residue via an autocatalytic post-translational modification. Two non-identical subunits are generated from the proenzyme in this reaction, and the pyruvate is formed at the N-terminus of the alpha chain, which is derived from the carboxyl end of the proenzyme. The autoendoproteolytic cleavage occurs by a canonical serine protease mechanism, in which the side chain hydroxyl group of the serine supplies its oxygen atom to form the C-terminus of the beta chain, while the remainder of the serine residue undergoes an oxidative deamination to produce ammonia and the pyruvoyl prosthetic group on the alpha chain. During this reaction, the Ser that is part of the protease active site of the proenzyme becomes the pyruvoyl prosthetic group, which constitutes an essential element of the active site of the mature decarboxylase.

The protein localises to the cell membrane. It carries out the reaction a 1,2-diacyl-sn-glycero-3-phospho-L-serine + H(+) = a 1,2-diacyl-sn-glycero-3-phosphoethanolamine + CO2. Its pathway is phospholipid metabolism; phosphatidylethanolamine biosynthesis; phosphatidylethanolamine from CDP-diacylglycerol: step 2/2. Functionally, catalyzes the formation of phosphatidylethanolamine (PtdEtn) from phosphatidylserine (PtdSer). This Clostridium botulinum (strain 657 / Type Ba4) protein is Phosphatidylserine decarboxylase proenzyme.